Here is an 80-residue protein sequence, read N- to C-terminus: RNA-binding protein Hfq (80 aa).

Positions Asp-10–Val-69 constitute a Sm domain.

It belongs to the Hfq family. Homohexamer.

Functionally, RNA chaperone that binds small regulatory RNA (sRNAs) and mRNAs to facilitate mRNA translational regulation in response to envelope stress, environmental stress and changes in metabolite concentrations. Also binds with high specificity to tRNAs. This is RNA-binding protein Hfq from Azoarcus sp. (strain BH72).